We begin with the raw amino-acid sequence, 413 residues long: Divalent metal cation transporter MntH (413 aa).

Topologically, residues 1 to 19 are cytoplasmic; that stretch reads MTDNRVENSSGRAARKLRL. Residues 20–39 traverse the membrane as a helical segment; sequence ALMGPAFIAAIGYIDPGNFA. Residues 40–51 lie on the Periplasmic side of the membrane; it reads TNIQAGASFGYQ. A helical membrane pass occupies residues 52 to 71; that stretch reads LLWVVVWANLMAMLIQILSA. Over 72-95 the chain is Cytoplasmic; the sequence is KLGIATGKNLAEQIRDHYPRPVVW. The chain crosses the membrane as a helical span at residues 96 to 118; it reads FYWVQAEIIAMATDLAEFIGAAI. Residues 119–125 lie on the Periplasmic side of the membrane; it reads GFKLILG. A helical transmembrane segment spans residues 126–145; that stretch reads VSLLQGAVLTGIATFLILML. At 146-155 the chain is on the cytoplasmic side; it reads QRRGQKPLEK. A helical transmembrane segment spans residues 156-175; the sequence is VIGGLLLFVAAAYIVELFFS. Residues 176 to 196 lie on the Periplasmic side of the membrane; the sequence is QPDMAQLGKGMVIPALPNPEA. Residues 197 to 220 traverse the membrane as a helical segment; that stretch reads VFLAAGVLGATIMPHVIYLHSSLT. Topologically, residues 221-238 are cytoplasmic; sequence QHLHGGTRQQRYSATKWD. Residues 239–258 form a helical membrane-spanning segment; sequence VAIAMTIAGFVNLAMMATAA. Residues 259–276 lie on the Periplasmic side of the membrane; sequence AAFHFSGHTGIADLDQAY. Residues 277 to 297 traverse the membrane as a helical segment; it reads LTLEPLLSHAAATVFGLSLVA. Topologically, residues 298-327 are cytoplasmic; it reads AGLSSTVVGTLAGQVVMQGFVRFHIPLWVR. Residues 328–344 form a helical membrane-spanning segment; that stretch reads RSITMLPSFIVILMGLD. The Periplasmic segment spans residues 345–350; the sequence is PTRILV. The chain crosses the membrane as a helical span at residues 351–370; it reads MSQVLLSFGIALALVPLLIF. Topologically, residues 371–387 are cytoplasmic; the sequence is TSNATLMGELVNTRRVK. The chain crosses the membrane as a helical span at residues 388-406; sequence QIGWIIVVLVVALNIWLLV. Over 407-413 the chain is Periplasmic; that stretch reads GTVMGLS.

The protein belongs to the NRAMP family.

The protein localises to the cell inner membrane. H(+)-stimulated, divalent metal cation uptake system. This Salmonella gallinarum (strain 287/91 / NCTC 13346) protein is Divalent metal cation transporter MntH.